Here is a 248-residue protein sequence, read N- to C-terminus: MKRVSVKNYLVCLLIAVCAIFVFPANASAMHIMEGYLAPGWCISWGVMCMPFLVIGFFSIKKKIEVSSKNLTLLAMCGAFAFVLSALKMPSVTGSCSHPTGVGLGAVLFGPTAMSVIGAIILLFQAILLAHGGITTLGANVFSMAIVGPLVSFGVFKLSKRWGAKAGLAVFLAVFFGDLMTYVITSVELAMAYPDATGSFMVSLGKFISIFGFTQVPLAVCEGLLTVVIYNVLAKYSAKELKALSAIY.

An N-terminal signal peptide occupies residues 1–29 (MKRVSVKNYLVCLLIAVCAIFVFPANASA). 6 helical membrane passes run 40–60 (GWCI…FFSI), 72–92 (TLLA…MPSV), 104–124 (LGAV…ILLF), 136–156 (TLGA…FGVF), 167–187 (GLAV…ITSV), and 210–230 (IFGF…VVIY).

Belongs to the CbiM family. Forms an energy-coupling factor (ECF) transporter complex composed of an ATP-binding protein (A component, CbiO), a transmembrane protein (T component, CbiQ) and 2 possible substrate-capture proteins (S components, CbiM and CbiN) of unknown stoichimetry.

The protein localises to the cell membrane. The protein operates within cofactor biosynthesis; adenosylcobalamin biosynthesis. Part of the energy-coupling factor (ECF) transporter complex CbiMNOQ involved in cobalt import. In Ruminiclostridium cellulolyticum (strain ATCC 35319 / DSM 5812 / JCM 6584 / H10) (Clostridium cellulolyticum), this protein is Cobalt transport protein CbiM.